Here is a 384-residue protein sequence, read N- to C-terminus: DNA replication and repair protein RecF (384 aa).

30 to 37 (GENAQGKT) provides a ligand contact to ATP.

Belongs to the RecF family.

Its subcellular location is the cytoplasm. In terms of biological role, the RecF protein is involved in DNA metabolism; it is required for DNA replication and normal SOS inducibility. RecF binds preferentially to single-stranded, linear DNA. It also seems to bind ATP. This is DNA replication and repair protein RecF from Levilactobacillus brevis (strain ATCC 367 / BCRC 12310 / CIP 105137 / JCM 1170 / LMG 11437 / NCIMB 947 / NCTC 947) (Lactobacillus brevis).